The primary structure comprises 189 residues: Shikimate kinase (189 aa).

11–16 is a binding site for ATP; it reads GTGKSA. Ser15 contributes to the Mg(2+) binding site. Residues Asp33, Arg57, and Gly79 each coordinate substrate. Arg117 contacts ATP. Arg135 is a substrate binding site.

This sequence belongs to the shikimate kinase family. As to quaternary structure, monomer. Mg(2+) is required as a cofactor.

It localises to the cytoplasm. The catalysed reaction is shikimate + ATP = 3-phosphoshikimate + ADP + H(+). Its pathway is metabolic intermediate biosynthesis; chorismate biosynthesis; chorismate from D-erythrose 4-phosphate and phosphoenolpyruvate: step 5/7. Functionally, catalyzes the specific phosphorylation of the 3-hydroxyl group of shikimic acid using ATP as a cosubstrate. This is Shikimate kinase from Desulforudis audaxviator (strain MP104C).